Here is a 70-residue protein sequence, read N- to C-terminus: Brevinin-1CG3 (70 aa).

Positions Met-1–Cys-22 are cleaved as a signal peptide. The propeptide at Glu-23 to Glu-44 is removed in mature form. A disulfide bridge connects residues Cys-64 and Cys-70.

The protein belongs to the frog skin active peptide (FSAP) family. Brevinin subfamily. Expressed by the skin glands.

The protein resides in the secreted. Its function is as follows. Antimicrobial peptide active against a variety of Gram-positive and some Gram-negative bacterial strains. Has antifungal activity against a slime mold isolate. Has hemolytic activity against human erythrocytes. This is Brevinin-1CG3 from Amolops chunganensis (Chungan torrent frog).